The following is a 351-amino-acid chain: Auxin-responsive protein IAA27 (351 aa).

The segment at 1–37 (MMNLISFETPPLGRRSQDGGSSSSSITAATTTTNKAK) is disordered. The span at 21-34 (SSSSSITAATTTTN) shows a compositional bias: low complexity. The PB1 domain occupies 233–327 (NMFAKVHMDG…SAKRLYIAKN (95 aa)).

This sequence belongs to the Aux/IAA family. As to quaternary structure, homodimers and heterodimers. Expressed in roots and seedlings.

The protein localises to the nucleus. Its function is as follows. Aux/IAA proteins are short-lived transcriptional factors that function as repressors of early auxin response genes at low auxin concentrations. This is Auxin-responsive protein IAA27 (IAA27) from Oryza sativa subsp. japonica (Rice).